The sequence spans 629 residues: tRNA uridine 5-carboxymethylaminomethyl modification enzyme MnmG (629 aa).

FAD contacts are provided by residues 14–19, valine 126, and serine 181; that span reads GAGHAG. Residue 273–287 coordinates NAD(+); the sequence is GPRYCPSIEDKVVRF. Glutamine 370 serves as a coordination point for FAD.

Belongs to the MnmG family. In terms of assembly, homodimer. Heterotetramer of two MnmE and two MnmG subunits. FAD is required as a cofactor.

The protein resides in the cytoplasm. NAD-binding protein involved in the addition of a carboxymethylaminomethyl (cmnm) group at the wobble position (U34) of certain tRNAs, forming tRNA-cmnm(5)s(2)U34. This Geobacillus thermodenitrificans (strain NG80-2) protein is tRNA uridine 5-carboxymethylaminomethyl modification enzyme MnmG.